Here is an 861-residue protein sequence, read N- to C-terminus: Interleukin-12 receptor subunit beta-2 (861 aa).

An N-terminal signal peptide occupies residues 1–23 (MARTVCGCSWALIFIIMSLLVKA). Residues 24–622 (KIDVCKRGDV…REFCLQGKAN (599 aa)) lie on the Extracellular side of the membrane. 4 N-linked (GlcNAc...) asparagine glycosylation sites follow: Asn-48, Asn-129, Asn-166, and Asn-271. Fibronectin type-III domains lie at 126-224 (QPQN…VVRP), 226-317 (PPWD…TQTP), 318-415 (EKEP…NIAD), 423-520 (APQQ…KHKA), and 521-620 (PLSG…LQGK). A WSXWS motif motif is present at residues 305 to 309 (WSDWS). N-linked (GlcNAc...) asparagine glycosylation is found at Asn-347, Asn-376, and Asn-480. A helical membrane pass occupies residues 623–643 (WSTFVAPSICIAVITVGVFSM). Residues 644–861 (RCFRQKVFVL…LKMGCGSLML (218 aa)) lie on the Cytoplasmic side of the membrane. Residues 662–670 (CSREIPDPA) carry the Box 1 motif motif. Residues 718–761 (FRRPHHPNWPGKGQRLQGRHASEEDTGSSASSPPPPRALTAETG) form a disordered region. The residue at position 800 (Tyr-800) is a Phosphotyrosine.

This sequence belongs to the type I cytokine receptor family. Type 2 subfamily. In terms of assembly, heterodimer/heterooligomer; disulfide-linked. The functional high affinity IL12 receptor is composed of I12RB1 and IL12RB2. Il12RB2 binds JAK2 (via its N-terminal) through a membrane-proximal region of the cytoplasmic domain. Post-translationally, on IL12 stimulation, phosphorylated on C-terminal tyrosine residues.

The protein resides in the membrane. Its function is as follows. Receptor for interleukin-12. This subunit is the signaling component coupling to the JAK2/STAT4 pathway. In Sus scrofa (Pig), this protein is Interleukin-12 receptor subunit beta-2 (IL12RB2).